The following is a 447-amino-acid chain: MTTILKHLPAGQRIGIAFSGGLDTSAALLWMRQKGAVPYAYTANLGQPDEDDYDAIPRRAMEYGAENARLIDCRKQLVAEGIAAIQCGAFHNTTGGLTYFNTTPLGRAVTGTMLVAAMKEDGVNIWGDGSTYKGNDIERFYRYGLLTNAELQIYKPWLDTDFIDELGGRHEMSEFMIACGFDYKMSVEKAYSTDSNMLGATHEAKDLEFLNSSVKIVNPIMGVKFWDESVKIPAEEVTVRFEQGHPVALNGKTFSDDVEMMLEANRIGGRHGLGMSDQIENRIIEAKSRGIYEAPGMALLHIAYERLLTGIHNEDTIEQYHSHGRQLGKLLYQGRWFDSQALMLRDGLQRWVASQITGEVTLELRRGNDYSILNTVSDNLTYKAERLTMEKGESVFSPDDRIGQLTMRNLDITDTREKLFGYAKAGLLTASSATGLPQVENLENKGK.

ATP is bound by residues alanine 17–serine 25 and alanine 43. Tyrosine 99 is a binding site for L-citrulline. Residues glycine 129 and threonine 131 each coordinate ATP. The L-aspartate site is built by threonine 131, asparagine 135, and aspartate 136. Asparagine 135 serves as a coordination point for L-citrulline. Residue aspartate 136 participates in ATP binding. L-citrulline contacts are provided by arginine 139 and serine 192. ATP is bound at residue aspartate 194. Threonine 201, glutamate 203, and glutamate 280 together coordinate L-citrulline.

Belongs to the argininosuccinate synthase family. Type 2 subfamily. In terms of assembly, homotetramer.

The protein resides in the cytoplasm. The catalysed reaction is L-citrulline + L-aspartate + ATP = 2-(N(omega)-L-arginino)succinate + AMP + diphosphate + H(+). Its pathway is amino-acid biosynthesis; L-arginine biosynthesis; L-arginine from L-ornithine and carbamoyl phosphate: step 2/3. The chain is Argininosuccinate synthase from Salmonella agona (strain SL483).